The sequence spans 254 residues: 3-deoxy-manno-octulosonate cytidylyltransferase (254 aa).

This sequence belongs to the KdsB family.

The protein resides in the cytoplasm. The catalysed reaction is 3-deoxy-alpha-D-manno-oct-2-ulosonate + CTP = CMP-3-deoxy-beta-D-manno-octulosonate + diphosphate. It participates in nucleotide-sugar biosynthesis; CMP-3-deoxy-D-manno-octulosonate biosynthesis; CMP-3-deoxy-D-manno-octulosonate from 3-deoxy-D-manno-octulosonate and CTP: step 1/1. The protein operates within bacterial outer membrane biogenesis; lipopolysaccharide biosynthesis. Activates KDO (a required 8-carbon sugar) for incorporation into bacterial lipopolysaccharide in Gram-negative bacteria. The polypeptide is 3-deoxy-manno-octulosonate cytidylyltransferase (Ectopseudomonas mendocina (strain ymp) (Pseudomonas mendocina)).